Reading from the N-terminus, the 446-residue chain is tRNA modification GTPase MnmE (446 aa).

Residues Arg-21, Glu-77, and Lys-116 each coordinate (6S)-5-formyl-5,6,7,8-tetrahydrofolate. A TrmE-type G domain is found at 212-370; sequence GFRIALIGAP…LRAALASHVA (159 aa). Asn-222 provides a ligand contact to K(+). GTP-binding positions include 222–227, 241–247, and 266–269; these read NAGKST, TDVAGTT, and DTAG. Ser-226 lines the Mg(2+) pocket. K(+)-binding residues include Thr-241, Val-243, and Thr-246. Residue Thr-247 coordinates Mg(2+). Position 446 (Lys-446) interacts with (6S)-5-formyl-5,6,7,8-tetrahydrofolate.

It belongs to the TRAFAC class TrmE-Era-EngA-EngB-Septin-like GTPase superfamily. TrmE GTPase family. As to quaternary structure, homodimer. Heterotetramer of two MnmE and two MnmG subunits. It depends on K(+) as a cofactor.

It is found in the cytoplasm. Functionally, exhibits a very high intrinsic GTPase hydrolysis rate. Involved in the addition of a carboxymethylaminomethyl (cmnm) group at the wobble position (U34) of certain tRNAs, forming tRNA-cmnm(5)s(2)U34. This Caulobacter vibrioides (strain ATCC 19089 / CIP 103742 / CB 15) (Caulobacter crescentus) protein is tRNA modification GTPase MnmE.